The chain runs to 663 residues: Protein THEMIS2 (663 aa).

CABIT stretches follow at residues 2-237 (EPVP…TASS) and 238-515 (QHIH…EAEG). The interval 545 to 663 (ASESQAPPPR…DMDDHDYEEI (119 aa)) is disordered. Residues 559-577 (QGINKKQQNIQSCKESSVK) are compositionally biased toward polar residues. Phosphothreonine is present on threonine 596. A compositionally biased stretch (polar residues) spans 621–641 (NPQTQNSVLSMKPKTSSSLGK). A compositionally biased stretch (acidic residues) spans 653 to 663 (PDMDDHDYEEI). Tyrosine 660 carries the phosphotyrosine modification.

Belongs to the themis family. In terms of assembly, interacts with VAV1. Interacts with LAT. Interacts constitutively with GRB2, LYN and PLCG2; these interactions increase the activation of PLCG2 and its downstream pathways following B cell receptor stimulation. In terms of processing, phosphorylation at Tyr-660 is induced by LPS. Phosphorylated by Src kinases (Lck or Fyn) following BCR engagement. As to expression, expressed in both developing and mature B-cells with high expression in immature, follicular and B1 B cells. Also expressed in macrophages and dendritic cells. Down-regulated in splenocytes of mice developing arthritis in a collagen-induced model, not in those of mice failing to develop the disease. Transiently down-regulated in splenocytes of mice infected with influenza virus.

The protein localises to the nucleus. It is found in the cytoplasm. Its function is as follows. May constitute a control point in macrophage inflammatory response, promoting LPS-induced TLR4-mediated TNF production. Determines the threshold for activation of B cells by low-affinity and low-avidity ligands via PLCG2 activation and its downstream pathways. This is Protein THEMIS2 from Mus musculus (Mouse).